The following is a 691-amino-acid chain: POU domain, class 6, transcription factor 2 (691 aa).

Disordered regions lie at residues 1–61 (MIAG…RGNT), 188–297 (QQQQ…LQLV), and 435–461 (GQAATSHSPVRQASSSSSSSSSSSALS). The span at 17-28 (MNAELRGEDKAA) shows a compositional bias: basic and acidic residues. 2 stretches are compositionally biased toward low complexity: residues 188–197 (QQQQQQQQQQ) and 206–216 (QHPQPASQAPP). Positions 217–237 (QSQPTPPHQPPPASQQLPAPP) are enriched in pro residues. The span at 238–272 (AQLEQATQPQQHQPHSHPQNQTQNQPSPTQQSSSP) shows a compositional bias: low complexity. Positions 437–447 (AATSHSPVRQA) are enriched in polar residues. The span at 448–458 (SSSSSSSSSSS) shows a compositional bias: low complexity. The 111-residue stretch at 476–586 (VDGVNLEEIR…VLERWMAEAE (111 aa)) folds into the POU-specific domain. Positions 607-666 (KRKRRTSFTPQALEILNAHFEKNTHPSGQEMTEIAEKLNYDREVVRVWFCNKRQALKNTI) form a DNA-binding region, homeobox. The disordered stretch occupies residues 670-691 (KQHEPTSAAPLEPLADSPEENC).

It belongs to the POU transcription factor family. Class-6 subfamily. Expressed in kidney, heart, muscle, spleen and ovary, but not in lung.

It localises to the nucleus. Probable transcription factor likely to be involved in early steps in the differentiation of amacrine and ganglion cells. Recognizes and binds to the DNA sequence 5'-ATGCAAAT-3'. The polypeptide is POU domain, class 6, transcription factor 2 (Pou6f2) (Mus musculus (Mouse)).